The chain runs to 317 residues: tRNA dimethylallyltransferase (317 aa).

ATP is bound at residue 19 to 26 (GPTASGKS). 21 to 26 (TASGKS) is a substrate binding site. The tract at residues 44-47 (DSMQ) is interaction with substrate tRNA.

Belongs to the IPP transferase family. In terms of assembly, monomer. Mg(2+) serves as cofactor.

It carries out the reaction adenosine(37) in tRNA + dimethylallyl diphosphate = N(6)-dimethylallyladenosine(37) in tRNA + diphosphate. Its function is as follows. Catalyzes the transfer of a dimethylallyl group onto the adenine at position 37 in tRNAs that read codons beginning with uridine, leading to the formation of N6-(dimethylallyl)adenosine (i(6)A). The protein is tRNA dimethylallyltransferase of Methylorubrum populi (strain ATCC BAA-705 / NCIMB 13946 / BJ001) (Methylobacterium populi).